The chain runs to 1164 residues: Protein PLASTID MOVEMENT IMPAIRED 1-RELATED 1 (1164 aa).

The segment at 30–54 (KNPRGSVAGSNKTPTKPLSRSNLAE) is disordered. The segment covering 37–51 (AGSNKTPTKPLSRSN) has biased composition (polar residues). One can recognise a C2 NT-type domain in the interval 69 to 217 (INHVRNRRFN…TLSMSFGYTV (149 aa)). Polar residues predominate over residues 224-263 (PASSGSTQNFRSSSNVKQTSNNTGLTRAISAKSSLGNGKS). 4 disordered regions span residues 224–268 (PASS…SRRY), 466–486 (APEE…PKDA), 1038–1063 (SELK…PMEE), and 1124–1164 (GSAK…IMPK). Composition is skewed to basic and acidic residues over residues 469-486 (EGNK…PKDA) and 1052-1062 (SDAKKEEKPME).

The protein localises to the cytoplasm. In terms of biological role, together with PMI1, necessary for chloroplast and nuclear photorelocation movements via the regulation of chloroplast-actin (cp-actin) filaments in pavement cells. The polypeptide is Protein PLASTID MOVEMENT IMPAIRED 1-RELATED 1 (Arabidopsis thaliana (Mouse-ear cress)).